Here is a 266-residue protein sequence, read N- to C-terminus: Integral membrane protein 2B (266 aa).

Topologically, residues Met1–Cys54 are cytoplasmic. The chain crosses the membrane as a helical; Signal-anchor for type II membrane protein span at residues Trp55–Leu75. Topologically, residues Tyr76 to Ser266 are lumenal. Positions Glu102–Val134 are necessary for interaction with APP and inhibitor effects on APP processing. Positions Phe137–Leu231 constitute a BRICHOS domain. Disulfide bonds link Cys164/Cys223 and Cys248/Cys265. The N-linked (GlcNAc...) asparagine glycan is linked to Asn170.

It belongs to the ITM2 family. As to quaternary structure, homodimer; disulfide-linked. Interacts with SPPL2A and SPPL2B. Interacts with APP. Mature BRI2 (mBRI2) interacts with the APP amyloid-beta A4 protein; the interaction occurs at the cell surface and in the endocytic compartments and enable alpha- and beta-secretase-induced APP cleavage inhibition. Mature BRI2 (mBRI2) interacts with the APP C99; the interaction occurs in the endocytic compartments and enable gamma-secretase-induced C99 cleavage inhibition. May form heterodimers with Bri23 peptide and APP amyloid-beta protein 40. Interacts with ADAM7 in sperm; the interaction increases following capacitation. The ectodomain C-terminal part of the imBRI2 is processed by furin producing a secreted Bri23 peptide and a mature BRI2, membrane form (mBRI2). The remaining part of the ectodomain of mBRI2 containing the BRICHOS domain is cleaved by ADAM10 and is secreted (BRI2C, soluble form). The membrane-bound N-terminal fragment (BRI2C, membrane form) is further proteolytically processed by SPPL2A and SPPL2B through regulated intramembrane proteolysis producing a secreted C-peptide and a BRI2 intracellular domain (BRI2 ICD) released in the cytosol. Shedding by ADAM10 facilitates intramembrane cleavage but is not absolutely required for BRI2 ICD generation. Post-translationally, glycosylation at Asn-170 is important for cell surface localization, but doesn't affect furin- and ADAM10-induced proteolytic processing.

It localises to the golgi apparatus membrane. Its subcellular location is the cell membrane. The protein resides in the endosome membrane. The protein localises to the secreted. Its function is as follows. Plays a regulatory role in the processing of the amyloid-beta A4 precursor protein (APP) and acts as an inhibitor of the amyloid-beta peptide aggregation and fibrils deposition. Plays a role in the induction of neurite outgrowth. Functions as a protease inhibitor by blocking access of secretases to APP cleavage sites. Mature BRI2 (mBRI2) functions as a modulator of the amyloid-beta A4 precursor protein (APP) processing leading to a strong reduction in the secretion of secretase-processed amyloid-beta protein 40 and amyloid-beta protein 42. In terms of biological role, bri23 peptide prevents aggregation of APP amyloid-beta protein 42 into toxic oligomers. This Sus scrofa (Pig) protein is Integral membrane protein 2B (ITM2B).